The chain runs to 336 residues: MAASLRLLGAASGLRYWSRRLRPAAGSFAAVCSRSVASKTPVGFIGLGNMGNPMAKNLMKHGYPLIIYDVFPDACKEFQDAGEQVVSSPADVAEKADRIITMLPTSINAIEAYSGANGILKKVKKGSLLIDSSTIDPAVSKELAKEVEKMGAVFMDAPVSGGVGAARSGNLTFMVGGVEDEFAAAQELLGCMGSNVVYCGAVGTGQAAKICNNMLLAISMIGTAEAMNLGIRLGLDPKLLAKILNMSSGRCWSSDTYNPVPGVMDGVPSANNYQGGFGTTLMAKDLGLAQDSATSTKSPILLGSLAHQIYRMMCAKGYSKKDFSSVFQFLREEETF.

Residues methionine 1–valine 36 constitute a mitochondrion transit peptide. Threonine 40–tyrosine 68 contributes to the NAD(+) binding site. 2 positions are modified to N6-acetyllysine; alternate: lysine 60 and lysine 76. An N6-succinyllysine; alternate mark is found at lysine 60 and lysine 76. Lysine 95 is modified (N6-succinyllysine). Residues leucine 103–proline 104 and asparagine 108 contribute to the NAD(+) site. At lysine 121 the chain carries N6-acetyllysine. An NAD(+)-binding site is contributed by threonine 134. The residue at position 141 (lysine 141) is an N6-succinyllysine. Position 145 is an N6-acetyllysine (lysine 145). Lysine 149 carries the N6-acetyllysine; alternate modification. At lysine 149 the chain carries N6-succinyllysine; alternate. Lysine 209 is an active-site residue. 2 positions are modified to N6-acetyllysine; alternate: lysine 238 and lysine 242. N6-succinyllysine; alternate occurs at positions 238 and 242. Residue lysine 284 participates in NAD(+) binding. An N6-succinyllysine modification is found at lysine 297. Lysine 321 carries the N6-acetyllysine; alternate modification. Lysine 321 is modified (N6-succinyllysine; alternate).

This sequence belongs to the HIBADH-related family. 3-hydroxyisobutyrate dehydrogenase subfamily. Homodimer. Detected in skin fibroblasts.

It localises to the mitochondrion. The catalysed reaction is 3-hydroxy-2-methylpropanoate + NAD(+) = 2-methyl-3-oxopropanoate + NADH + H(+). It participates in amino-acid degradation; L-valine degradation. This Homo sapiens (Human) protein is 3-hydroxyisobutyrate dehydrogenase, mitochondrial (HIBADH).